A 459-amino-acid chain; its full sequence is GTPase Der (459 aa).

EngA-type G domains follow at residues 4-169 (PLVA…PEVA) and 179-355 (IAVA…AAHR). Residues 10-17 (GRPNVGKS), 57-61 (DTGGL), 120-123 (NKCE), 185-192 (GRPNVGKS), 232-236 (DTAGI), and 297-300 (NKWD) contribute to the GTP site. In terms of domain architecture, KH-like spans 356-441 (KRIATSVVNE…PIRFRWRSKS (86 aa)).

It belongs to the TRAFAC class TrmE-Era-EngA-EngB-Septin-like GTPase superfamily. EngA (Der) GTPase family. Associates with the 50S ribosomal subunit.

GTPase that plays an essential role in the late steps of ribosome biogenesis. The protein is GTPase Der of Synechococcus sp. (strain JA-3-3Ab) (Cyanobacteria bacterium Yellowstone A-Prime).